The primary structure comprises 156 residues: Ecotin (156 aa).

A signal peptide spans 1–19 (MKALLIAAGVAALSSTAMA). Cysteines 65 and 102 form a disulfide.

This sequence belongs to the protease inhibitor I11 (ecotin) family. As to quaternary structure, homodimer.

It is found in the periplasm. General inhibitor of family S1 serine proteases. In Pseudomonas aeruginosa (strain LESB58), this protein is Ecotin.